The following is a 278-amino-acid chain: 4-deoxy-L-threo-5-hexosulose-uronate ketol-isomerase (278 aa).

Zn(2+) contacts are provided by His-196, His-198, Glu-203, and His-245.

The protein belongs to the KduI family. Homohexamer. The cofactor is Zn(2+).

It carries out the reaction 5-dehydro-4-deoxy-D-glucuronate = 3-deoxy-D-glycero-2,5-hexodiulosonate. It functions in the pathway glycan metabolism; pectin degradation; 2-dehydro-3-deoxy-D-gluconate from pectin: step 4/5. Its function is as follows. Catalyzes the isomerization of 5-dehydro-4-deoxy-D-glucuronate to 3-deoxy-D-glycero-2,5-hexodiulosonate. The sequence is that of 4-deoxy-L-threo-5-hexosulose-uronate ketol-isomerase from Escherichia coli O139:H28 (strain E24377A / ETEC).